A 448-amino-acid polypeptide reads, in one-letter code: Ribosomal protein uS12 methylthiotransferase RimO (448 aa).

Residues 16 to 126 (PRISFVSLGC…VVAAVHEAVP (111 aa)) form the MTTase N-terminal domain. The [4Fe-4S] cluster site is built by cysteine 25, cysteine 61, cysteine 90, cysteine 157, cysteine 161, and cysteine 164. Residues 143 to 380 (LTPRHYAYLK…MEAQAGVSLK (238 aa)) enclose the Radical SAM core domain. The region spanning 383–448 (RAKVGKRLQV…DAYDLHGIAV (66 aa)) is the TRAM domain.

The protein belongs to the methylthiotransferase family. RimO subfamily. The cofactor is [4Fe-4S] cluster.

The protein localises to the cytoplasm. It catalyses the reaction L-aspartate(89)-[ribosomal protein uS12]-hydrogen + (sulfur carrier)-SH + AH2 + 2 S-adenosyl-L-methionine = 3-methylsulfanyl-L-aspartate(89)-[ribosomal protein uS12]-hydrogen + (sulfur carrier)-H + 5'-deoxyadenosine + L-methionine + A + S-adenosyl-L-homocysteine + 2 H(+). In terms of biological role, catalyzes the methylthiolation of an aspartic acid residue of ribosomal protein uS12. The chain is Ribosomal protein uS12 methylthiotransferase RimO from Methylorubrum populi (strain ATCC BAA-705 / NCIMB 13946 / BJ001) (Methylobacterium populi).